The chain runs to 610 residues: Membrane protein insertase YidC (610 aa).

A helical transmembrane segment spans residues 7–27; sequence FFITIALSILILALWQVFYLG. The interval 36 to 82 is disordered; that stretch reads QARIEEQQRQAQQAAQNRQASSSTGDTPQMPANPDSIPGQGDTKAAG. The span at 44–55 shows a compositional bias: low complexity; that stretch reads RQAQQAAQNRQA. Transmembrane regions (helical) follow at residues 358 to 378, 387 to 407, 458 to 478, 510 to 530, and 546 to 566; these read FDLL…FYLI, NFGV…FPLA, WPVL…YVTI, TVPH…TMFL, and IFTW…AGLV.

This sequence belongs to the OXA1/ALB3/YidC family. Type 1 subfamily. In terms of assembly, interacts with the Sec translocase complex via SecD. Specifically interacts with transmembrane segments of nascent integral membrane proteins during membrane integration.

Its subcellular location is the cell inner membrane. Functionally, required for the insertion and/or proper folding and/or complex formation of integral membrane proteins into the membrane. Involved in integration of membrane proteins that insert both dependently and independently of the Sec translocase complex, as well as at least some lipoproteins. Aids folding of multispanning membrane proteins. The sequence is that of Membrane protein insertase YidC from Brucella suis biovar 1 (strain 1330).